A 1376-amino-acid chain; its full sequence is Major capsid protein (1376 aa).

This sequence belongs to the herpesviridae major capsid protein family. In terms of assembly, homomultimer. Makes the hexons and eleven out of twelve pentons. Interacts with triplex proteins 1/TRX1 and 2/TRX2; adjacent capsomers are linked together in groups of three by triplexes, heterotrimeric complexes composed of one molecule of TRX1 and two molecules of TRX2. Interacts with scaffold protein; this interaction allows efficient MCP transport to the host nucleus. Interacts with capsid vertex component 2/CVC2. Interacts with the small capsomere-interacting protein/SCP.

It localises to the virion. Its subcellular location is the host nucleus. Its function is as follows. Self-assembles to form an icosahedral capsid with a T=16 symmetry, about 200 nm in diameter, and consisting of 150 hexons and 12 pentons (total of 162 capsomers). Hexons form the edges and faces of the capsid and are each composed of six MCP molecules. In contrast, one penton is found at each of the 12 vertices. Eleven of the pentons are MCP pentamers, while the last vertex is occupied by the portal complex. The capsid is surrounded by a layer of proteinaceous material designated the tegument which, in turn, is enclosed in an envelope of host cell-derived lipids containing virus-encoded glycoproteins. This Equus caballus (Horse) protein is Major capsid protein.